The primary structure comprises 150 residues: Avidin-related protein 7 (150 aa).

Positions 1–24 (MVHATSPLLLLLLLSLALVAPGLS) are cleaved as a signal peptide. The region spanning 26–147 (RKCSLTGEWD…GYNNFTRQRT (122 aa)) is the Avidin-like domain. C28 and C105 are joined by a disulfide. Biotin-binding residues include N36 and S40. N-linked (GlcNAc...) asparagine glycans are attached at residues N41 and N54. Residues Y57, T59, and D63 each coordinate biotin. N93 carries N-linked (GlcNAc...) asparagine glycosylation. Residues S95, S99, and N140 each coordinate biotin. N-linked (GlcNAc...) asparagine glycosylation is present at N141.

The protein belongs to the avidin/streptavidin family. Homotetramer. Glycosylated.

It localises to the secreted. In terms of biological role, forms a strong non-covalent specific complex with biotin. The sequence is that of Avidin-related protein 7 (AVR7) from Gallus gallus (Chicken).